We begin with the raw amino-acid sequence, 659 residues long: Protein phosphatase Slingshot homolog 3 (659 aa).

Residues 1-16 are compositionally biased toward polar residues; that stretch reads MALVTVSRSPPGSGAS. The tract at residues 1–31 is disordered; sequence MALVTVSRSPPGSGASTPVGPWDQAVQRRSR. A2 carries the post-translational modification N-acetylalanine. 2 positions are modified to phosphoserine: S9 and S37. The tract at residues 46–96 is disordered; sequence LGLQDGGDNDDAAEASSEPTEKAPSEEELHGDQTDFGQGSQSPQKQEEQRQ. The span at 64-78 shows a compositional bias: basic and acidic residues; the sequence is PTEKAPSEEELHGDQ. Residues 80–89 show a composition bias toward polar residues; the sequence is DFGQGSQSPQ. A phosphoserine mark is found at S85 and S87. The 56-residue stretch at 269 to 324 folds into the DEK-C domain; the sequence is EQMEQAIRAELWKVLDVSDLESVTSKEIRQALELRLGLPLQQYRDFIDNQMLLLVA. In terms of domain architecture, Tyrosine-protein phosphatase spans 328-469; sequence RASRIFPHLY…LQIYQGILTA (142 aa). Residue C413 is the Phosphocysteine intermediate of the active site. Disordered stretches follow at residues 482–534, 547–603, and 617–638; these read GVSP…RINL, SLEL…RQSV, and QAFQ…ISST. Over residues 547-557 the composition is skewed to low complexity; it reads SLELESTSETS.

The protein belongs to the protein-tyrosine phosphatase family. Does not bind to, or colocalize with, filamentous actin.

The protein resides in the cytoplasm. It is found in the cytoskeleton. Its subcellular location is the nucleus. It carries out the reaction O-phospho-L-tyrosyl-[protein] + H2O = L-tyrosyl-[protein] + phosphate. The catalysed reaction is O-phospho-L-seryl-[protein] + H2O = L-seryl-[protein] + phosphate. It catalyses the reaction O-phospho-L-threonyl-[protein] + H2O = L-threonyl-[protein] + phosphate. Its function is as follows. Protein phosphatase which may play a role in the regulation of actin filament dynamics. Can dephosphorylate and activate the actin binding/depolymerizing factor cofilin, which subsequently binds to actin filaments and stimulates their disassembly. The sequence is that of Protein phosphatase Slingshot homolog 3 (SSH3) from Homo sapiens (Human).